The following is a 149-amino-acid chain: Myoglobin (149 aa).

A2 carries the post-translational modification N-acetylalanine. Positions 2–143 constitute a Globin domain; it reads ADWDKVNSVW…ICSDIEKEYK (142 aa). H89 lines the heme b pocket.

Belongs to the globin family. In terms of assembly, monomeric.

It localises to the cytoplasm. It is found in the sarcoplasm. The enzyme catalyses Fe(III)-heme b-[protein] + nitric oxide + H2O = Fe(II)-heme b-[protein] + nitrite + 2 H(+). It carries out the reaction H2O2 + AH2 = A + 2 H2O. Monomeric heme protein which primary function is to store oxygen and facilitate its diffusion within muscle tissues. Reversibly binds oxygen through a pentacoordinated heme iron and enables its timely and efficient release as needed during periods of heightened demand. Depending on the oxidative conditions of tissues and cells, and in addition to its ability to bind oxygen, it also has a nitrite reductase activity whereby it regulates the production of bioactive nitric oxide. Under stress conditions, like hypoxia and anoxia, it also protects cells against reactive oxygen species thanks to its pseudoperoxidase activity. In Galeorhinus galeus (Tope shark), this protein is Myoglobin (mb).